The sequence spans 244 residues: MKNIKLVIEYDGTNYSGWQRQYNAITIQQRLEEAIEKATGEFSPVIGSSRTDAGVHARGFVCNFFTASKIPTSNIKMVLNTLLPEDIAVLDSKEVDSSFHSRYFTTGKEYSYTIVTGDRPPVIGRQYVYYFRRKLDIEKIKNSCEYFIGTHDFSAFKKKGSTARSSIRTIKELTVLKEKNIIKFNIVGDGFLYNMVRIIIGTLLEVGLGRFSIEYVKYILESKDRAKAGKPVPAKGLCLEKVFY.

The active-site Nucleophile is the Asp52. Tyr110 is a substrate binding site.

The protein belongs to the tRNA pseudouridine synthase TruA family. In terms of assembly, homodimer.

The enzyme catalyses uridine(38/39/40) in tRNA = pseudouridine(38/39/40) in tRNA. In terms of biological role, formation of pseudouridine at positions 38, 39 and 40 in the anticodon stem and loop of transfer RNAs. The chain is tRNA pseudouridine synthase A from Clostridium kluyveri (strain ATCC 8527 / DSM 555 / NBRC 12016 / NCIMB 10680 / K1).